Consider the following 200-residue polypeptide: Non-specific lipid transfer protein GPI-anchored 16 (200 aa).

A signal peptide spans M1–G20. Intrachain disulfides connect C27/C72, C38/C56, C57/C98, and C70/C107. The N-linked (GlcNAc...) asparagine glycan is linked to N87. The disordered stretch occupies residues S134 to S182. Positions A140–T163 are enriched in low complexity. T177 carries the GPI-anchor amidated threonine lipid modification. The propeptide at G178–L200 is removed in mature form.

The protein belongs to the plant LTP family. In terms of tissue distribution, expressed in seedlings, preferentially in hypocotyls and roots. Also observed in siliques.

It localises to the cell membrane. Its function is as follows. Essential protein involved in female gametophyte development. Probable lipid transfer protein. This Arabidopsis thaliana (Mouse-ear cress) protein is Non-specific lipid transfer protein GPI-anchored 16.